We begin with the raw amino-acid sequence, 423 residues long: Acyl-coenzyme A diphosphatase FITM2 (423 aa).

A disordered region spans residues 1–47; it reads MATKRRPLRPNLGGTAGSPSSSGSNMNFRPGGPDITRSEARGTRPTA. The Cytoplasmic portion of the chain corresponds to 1–75; it reads MATKRRPLRP…KTIFFNTDLK (75 aa). Residues 76 to 96 traverse the membrane as a helical segment; that stretch reads VALYLGSLFVISVIGDFVPFP. The Lumenal segment spans residues 97–113; the sequence is KTYFARSDNLFNQYFVK. The chain crosses the membrane as a helical span at residues 114 to 134; the sequence is IGWGWTLLFVVPFLVLSAYTI. Residues 135–146 lie on the Cytoplasmic side of the membrane; that stretch reads TCGDHKRMLRHH. A helical transmembrane segment spans residues 147-167; it reads FPRIVIATFFWFFWTKLFNVV. The Lumenal segment spans residues 168–191; it reads ENSYGRCTTKGYATKSSCLKAGHL. A helical transmembrane segment spans residues 192-212; it reads WKGFDISGHAFILIHSSLVLI. H200 is a catalytic residue. Topologically, residues 213–270 are cytoplasmic; sequence EEARPIIRWETIKEHIRNERHNRSTAENSGTNPLRTLNEEQMRSLQFLYKRLTPIIRT. Residues 271-291 traverse the membrane as a helical segment; that stretch reads LFIGMAALQLLWDIMLVGTML. The Lumenal segment spans residues 292-299; sequence YYHRMIEK. H294 is an active-site residue. The helical transmembrane segment at 300 to 320 threads the bilayer; sequence VISGIIAILTWYFTYRFWYPT. Topologically, residues 321 to 423 are cytoplasmic; that stretch reads PGLLPEAPGN…RDREQQTLES (103 aa). Disordered stretches follow at residues 344 to 381 and 400 to 423; these read FKRP…PRDQ and AAAN…TLES. Residues 351–367 are compositionally biased toward low complexity; the sequence is STGAATTSSGSNSSRTN. Basic and acidic residues predominate over residues 409–423; that stretch reads QQKRERDREQQTLES.

It belongs to the FIT family. FIT2 subfamily.

Its subcellular location is the endoplasmic reticulum membrane. It catalyses the reaction an acyl-CoA + H2O = an acyl-4'-phosphopantetheine + adenosine 3',5'-bisphosphate + 2 H(+). In terms of biological role, fatty acyl-coenzyme A (CoA) diphosphatase that hydrolyzes fatty acyl-CoA to yield acyl-4'-phosphopantetheine and adenosine 3',5'-bisphosphate. Preferentially hydrolyzes unsaturated long-chain acyl-CoA substrates in the endoplasmic reticulum (ER) lumen. This catalytic activity is required for maintaining ER structure and for lipid droplets (LDs) biogenesis, which are lipid storage organelles involved in maintaining lipid and energy homeostasis. May directly bind to diacylglycerol (DAGs) and triacylglycerol, which is also important for LD biogenesis. May support directional budding of nacent LDs from the ER into the cytosol by reducing DAG levels at sites of LD formation. Plays a role in the regulation of cell morphology and cytoskeletal organization. Required for correct morphology of nociceptive multi-dendritic sensory neurons. Required for normal mechanical amplification in hearing. This chain is Acyl-coenzyme A diphosphatase FITM2, found in Drosophila melanogaster (Fruit fly).